The chain runs to 427 residues: Enolase (427 aa).

Glutamine 163 is a (2R)-2-phosphoglycerate binding site. Residue glutamate 205 is the Proton donor of the active site. Mg(2+)-binding residues include aspartate 242, glutamate 285, and aspartate 312. (2R)-2-phosphoglycerate-binding residues include lysine 337, arginine 366, serine 367, and lysine 388. The active-site Proton acceptor is the lysine 337.

Belongs to the enolase family. Requires Mg(2+) as cofactor.

It localises to the cytoplasm. It is found in the secreted. Its subcellular location is the cell surface. The catalysed reaction is (2R)-2-phosphoglycerate = phosphoenolpyruvate + H2O. It functions in the pathway carbohydrate degradation; glycolysis; pyruvate from D-glyceraldehyde 3-phosphate: step 4/5. Functionally, catalyzes the reversible conversion of 2-phosphoglycerate (2-PG) into phosphoenolpyruvate (PEP). It is essential for the degradation of carbohydrates via glycolysis. This Burkholderia multivorans (strain ATCC 17616 / 249) protein is Enolase.